The sequence spans 393 residues: Cysteine protease ATG4B (393 aa).

N-acetylmethionine is present on Met1. Position 34 is a phosphoserine; by PKB/AKT1 and PKB/AKT2 (Ser34). Cys74 (nucleophile) is an active-site residue. Cys189 carries the post-translational modification S-nitrosocysteine. Catalysis depends on residues Asp278 and His280. 2 positions are modified to S-nitrosocysteine: Cys292 and Cys301. The cysteines at positions 292 and 361 are disulfide-linked. Ser316 carries the phosphoserine; by ULK1 modification. Ser383 is subject to Phosphoserine; by STK26. Residues 388–391 carry the LIR motif; the sequence is FEIL. Ser392 bears the Phosphoserine mark.

Belongs to the peptidase C54 family. Interacts with PFKP; promoting phosphorylation of ATG4B at Ser-34. Interacts with GBP7. In terms of processing, phosphorylation at Ser-383 and Ser-392 promotes autophagy by increasing protein delipidation activity without affecting proteolytic activation of ATG8 proteins. Phosphorylation at Ser-316 by ULK1 inhibits autophagy by decreasing both proteolytic activation and delipidation activities. Phosphorylation at Ser-316 is dephosphorylated by protein phosphatase 2A (PP2A). Phosphorylation at Ser-34 by AKT2 promotes its hydrolase activity, leading to increased proteolytic activation and delipidation of ATG8 family proteins. Phosphorylation at Ser-34 by AKT1 promotes mitochondrial localization and inhibition of the F1F0-ATP synthase activity, leading to elevation of mitochondrial reactive oxygen species (ROS). Ubiquitinated by RNF5, leading to its degradation by the proteasome. Post-translationally, S-nitrosylation at Cys-189 and Cys-292 in response to high glucose decreases both proteolytic activation and delipidation activities. In terms of processing, O-glycosylated by OGT, leading to increase protease activity, thereby promoting the proteolytic activation of ATG8 family proteins. Forms reversible intrachain disulfide bonds in response to oxidative stress. Forms interchain disulfide bonds, leading to formation of homooligomers in response to oxidation.

It localises to the cytoplasm. It is found in the cytosol. Its subcellular location is the cytoplasmic vesicle. The protein localises to the autophagosome. The protein resides in the endoplasmic reticulum. It localises to the mitochondrion. It catalyses the reaction [protein]-C-terminal L-amino acid-glycyl-phosphatidylethanolamide + H2O = [protein]-C-terminal L-amino acid-glycine + a 1,2-diacyl-sn-glycero-3-phosphoethanolamine. The catalysed reaction is [protein]-C-terminal L-amino acid-glycyl-phosphatidylserine + H2O = [protein]-C-terminal L-amino acid-glycine + a 1,2-diacyl-sn-glycero-3-phospho-L-serine. Its activity is regulated as follows. Inhibited by N-ethylmaleimide. Redox-regulated during autophagy since reducing conditions activate ATG4A whereas an oxidizing environment such as the presence of H(2)O(2) inhibits its activity. The cysteine protease activity compounds is inhibited by styrylquinoline compounds 4-28 and LV-320. In terms of biological role, cysteine protease that plays a key role in autophagy by mediating both proteolytic activation and delipidation of ATG8 family proteins. Required for canonical autophagy (macroautophagy), non-canonical autophagy as well as for mitophagy. The protease activity is required for proteolytic activation of ATG8 family proteins: cleaves the C-terminal amino acid of ATG8 proteins MAP1LC3A, MAP1LC3B, MAP1LC3C, GABARAPL1, GABARAPL2 and GABARAP, to reveal a C-terminal glycine. Exposure of the glycine at the C-terminus is essential for ATG8 proteins conjugation to phosphatidylethanolamine (PE) and insertion to membranes, which is necessary for autophagy. Protease activity is also required to counteract formation of high-molecular weight conjugates of ATG8 proteins (ATG8ylation): acts as a deubiquitinating-like enzyme that removes ATG8 conjugated to other proteins, such as ATG3. In addition to the protease activity, also mediates delipidation of ATG8 family proteins. Catalyzes delipidation of PE-conjugated forms of ATG8 proteins during macroautophagy. Also involved in non-canonical autophagy, a parallel pathway involving conjugation of ATG8 proteins to single membranes at endolysosomal compartments, by catalyzing delipidation of ATG8 proteins conjugated to phosphatidylserine (PS). Compared to other members of the family (ATG4A, ATG4C or ATG4C), constitutes the major protein for proteolytic activation of ATG8 proteins, while it displays weaker delipidation activity than other ATG4 paralogs. Involved in phagophore growth during mitophagy independently of its protease activity and of ATG8 proteins: acts by regulating ATG9A trafficking to mitochondria and promoting phagophore-endoplasmic reticulum contacts during the lipid transfer phase of mitophagy. This chain is Cysteine protease ATG4B, found in Homo sapiens (Human).